The primary structure comprises 118 residues: Mating-type P-specific polypeptide Pc (118 aa).

The HMG box DNA-binding region spans 29 to 97 (KTTIYKNGFM…VRKQIAKLER (69 aa)).

It localises to the nucleus. Its function is as follows. Mating type proteins are sequence specific DNA-binding proteins that act as master switches in yeast differentiation by controlling gene expression in a cell type-specific fashion. Required for conjugation and efficient meiosis. This Schizosaccharomyces kambucha (Fission yeast) protein is Mating-type P-specific polypeptide Pc (matPc).